A 209-amino-acid polypeptide reads, in one-letter code: MIRFITIPDFADYQVTLKLMEDYVNKVISDHEPEIIYLVEHLEVYTAGTNYKQEELLNYGDIPVIYTGRGGKFTFHGPGQRVIYPILNLASPNRHKDLKLYIKMLEEWIINSLNYFGIKAYIIKDKVGIWVKVRKDEFAKIAAIGVRVRKWVTYHGVAINISTDLSKFSGIIPCGLENSLVTSLNQLGIHVEMSEFDKIIQTEFNKIFK.

In terms of domain architecture, BPL/LPL catalytic spans 30–209; the sequence is DHEPEIIYLV…IQTEFNKIFK (180 aa). Substrate is bound by residues 69 to 76, 143 to 145, and 156 to 158; these read RGGKFTFH, AIG, and GVA. Residue Cys174 is the Acyl-thioester intermediate of the active site.

The protein belongs to the LipB family.

It localises to the cytoplasm. The catalysed reaction is octanoyl-[ACP] + L-lysyl-[protein] = N(6)-octanoyl-L-lysyl-[protein] + holo-[ACP] + H(+). It functions in the pathway protein modification; protein lipoylation via endogenous pathway; protein N(6)-(lipoyl)lysine from octanoyl-[acyl-carrier-protein]: step 1/2. Functionally, catalyzes the transfer of endogenously produced octanoic acid from octanoyl-acyl-carrier-protein onto the lipoyl domains of lipoate-dependent enzymes. Lipoyl-ACP can also act as a substrate although octanoyl-ACP is likely to be the physiological substrate. This Rickettsia africae (strain ESF-5) protein is Octanoyltransferase.